We begin with the raw amino-acid sequence, 156 residues long: ATP synthase subunit b (156 aa).

A helical membrane pass occupies residues Phe-7–Pro-27.

The protein belongs to the ATPase B chain family. As to quaternary structure, F-type ATPases have 2 components, F(1) - the catalytic core - and F(0) - the membrane proton channel. F(1) has five subunits: alpha(3), beta(3), gamma(1), delta(1), epsilon(1). F(0) has three main subunits: a(1), b(2) and c(10-14). The alpha and beta chains form an alternating ring which encloses part of the gamma chain. F(1) is attached to F(0) by a central stalk formed by the gamma and epsilon chains, while a peripheral stalk is formed by the delta and b chains.

Its subcellular location is the cell inner membrane. F(1)F(0) ATP synthase produces ATP from ADP in the presence of a proton or sodium gradient. F-type ATPases consist of two structural domains, F(1) containing the extramembraneous catalytic core and F(0) containing the membrane proton channel, linked together by a central stalk and a peripheral stalk. During catalysis, ATP synthesis in the catalytic domain of F(1) is coupled via a rotary mechanism of the central stalk subunits to proton translocation. In terms of biological role, component of the F(0) channel, it forms part of the peripheral stalk, linking F(1) to F(0). The chain is ATP synthase subunit b from Cupriavidus necator (strain ATCC 17699 / DSM 428 / KCTC 22496 / NCIMB 10442 / H16 / Stanier 337) (Ralstonia eutropha).